A 427-amino-acid chain; its full sequence is Trigger factor (427 aa).

A PPIase FKBP-type domain is found at 163 to 248 (GDTVVIDFVG…IHEVKAKEVP (86 aa)).

It belongs to the FKBP-type PPIase family. Tig subfamily.

It is found in the cytoplasm. It carries out the reaction [protein]-peptidylproline (omega=180) = [protein]-peptidylproline (omega=0). Involved in protein export. Acts as a chaperone by maintaining the newly synthesized protein in an open conformation. Functions as a peptidyl-prolyl cis-trans isomerase. The polypeptide is Trigger factor (Streptococcus pneumoniae (strain Taiwan19F-14)).